The sequence spans 521 residues: HTH-type transcriptional regulatory protein TyrR (521 aa).

Positions 2–72 (RLEVFCQDRI…GVTDVRTVPY (71 aa)) constitute an ACT domain. Residues 78-120 (EHRVLSALLVAMPEPVFSVDLRTKVELANPAAQNLFNLDENKI) form the PAS domain. One can recognise a Sigma-54 factor interaction domain in the interval 207–436 (IVAVTPRMRQ…LKNALYRALT (230 aa)). ATP-binding positions include 235–242 (GDTGTGKD) and 298–307 (ANGGSVLLDE). Residues 489–509 (STRKLAKRLGVSHTAIANKLR) constitute a DNA-binding region (H-T-H motif).

In terms of assembly, homodimer. In presence of tyrosine (or high concentrations of phenylalanine or tryptophan) and ATP, it self-associates to form an hexamer.

It is found in the cytoplasm. Its function is as follows. Dual transcriptional regulator of the TyrR regulon, which includes a number of genes coding for proteins involved in the biosynthesis or transport of the three aromatic amino acids, phenylalanine, tyrosine and tryptophan. These three aromatic amino acids act as effectors which bind to the TyrR protein to form an active regulatory protein. Acts by binding specifically to TyrR boxes in the promoter region of the target genes. This chain is HTH-type transcriptional regulatory protein TyrR, found in Enterobacter agglomerans (Erwinia herbicola).